We begin with the raw amino-acid sequence, 669 residues long: Protein fem-1 homolog A (669 aa).

7 ANK repeats span residues 2-31 (DLRTAVYNAARDGKLQLLQKLLSGRSREEL), 40-70 (GGGTPLLIAARYGHLDVVEYLVDRCGASVEA), 82-111 (EGAPPLWAASAAGHLDVVRSLLRRGASVNR), 115-145 (TNSTPLRAACFDGHLEVVRYLVGEHQADLEV), 149-178 (HGHTCLMISCYKGHREIARYLLEQGAQVNR), 182-211 (KGNTALHDCAESGSLEILQLLLGCKARMER), and 214-243 (YGMTPLLAASVTGHTNIVEYLIQEQPGQEQ). Ser-108 is modified (phosphoserine). The segment at 240-278 (GQEQVAGGEAQPGLPQEDPSTSQGCAQPQGAPCCSSSPE) is disordered. TPR repeat units lie at residues 298 to 332 (VEALELLGATYVDKKRDLLGALKHWRRAMELRHQG) and 390 to 423 (SYYIRYRGAVYADSGNFERCIRLWKYALDMQQSN). ANK repeat units lie at residues 534-576 (NGFT…DPDS) and 580-609 (DNNTPLHIAAQNNCPAIMNALIEAGAHMDA).

The protein belongs to the fem-1 family. As to quaternary structure, component of a CRL2 E3 ubiquitin-protein ligase complex, also named ECS (Elongin BC-CUL2/5-SOCS-box protein) complex, composed of CUL2, Elongin BC (ELOB and ELOC), RBX1 and substrate-specific adapter FEM1A. Interacts with PTGER4. Interacts with NFKB1; the interaction is direct. Phosphorylated; highly phosphorylated in myoblasts and myotubes. Phosphorylation at Ser-108 promotes PGE2-EP4-mediated inhibition of inflammation. Dephosphorylated by protein phosphatase 2A (PP2A). Present in macrophages derived from peripheral blood monocytes. Also present in atheromata (at protein level).

The protein localises to the mitochondrion. Its subcellular location is the cytoplasm. Its pathway is protein modification; protein ubiquitination. Its function is as follows. Substrate-recognition component of a Cul2-RING (CRL2) E3 ubiquitin-protein ligase complex of the DesCEND (destruction via C-end degrons) pathway, which recognizes a C-degron located at the extreme C terminus of target proteins, leading to their ubiquitination and degradation. The C-degron recognized by the DesCEND pathway is usually a motif of less than ten residues and can be present in full-length proteins, truncated proteins or proteolytically cleaved forms. The CRL2(FEM1A) complex specifically recognizes proteins with an arginine at the C-terminus: recognizes and binds proteins ending with -Lys/Arg-Xaa-Arg and -Lys/Arg-Xaa-Xaa-Arg C-degrons, such as SIL1 or OR51B2, leading to their ubiquitination and degradation. Promotes ubiquitination and degradation of SLBP. Involved in PGE2-EP4-mediated inhibition of inflammation of macrophages via interaction with NFKB1 and PTGER4. Promotes inflammation in brain microglia through MAP2K4/MKK4-mediated signaling. This is Protein fem-1 homolog A from Homo sapiens (Human).